Reading from the N-terminus, the 401-residue chain is Cartilage-associated protein (401 aa).

An N-terminal signal peptide occupies residues 1 to 26 (MEPGRRGAAALLALLCVACALRAGRA). N87 and N363 each carry an N-linked (GlcNAc...) asparagine glycan.

The protein belongs to the leprecan family. In terms of tissue distribution, found in articular chondrocytes. Expressed in a variety of tissues.

Its subcellular location is the secreted. It is found in the extracellular space. It localises to the extracellular matrix. In terms of biological role, necessary for efficient 3-hydroxylation of fibrillar collagen prolyl residues. The sequence is that of Cartilage-associated protein (CRTAP) from Homo sapiens (Human).